A 372-amino-acid chain; its full sequence is Transcription factor YY2 (372 aa).

A mediates transcriptional activation region spans residues 32–102 (MEDIPTESVQ…SDNQLGNDLE (71 aa)). Residues 126–136 (SAASTSTSTQS) show a composition bias toward low complexity. Disordered regions lie at residues 126-172 (SAAS…WEQK) and 186-210 (TMWSPNDNNDQGAVGEGQAENPPDY). Positions 137 to 146 (RSKKPSKKPS) are enriched in basic residues. 2 stretches are compositionally biased toward polar residues: residues 154-165 (EANPAGSSSSLG) and 186-196 (TMWSPNDNNDQ). The interval 237 to 372 (EFTKVKPKRS…LTHVKTKNNP (136 aa)) is mediates transcriptional repression. 4 C2H2-type zinc fingers span residues 254 to 278 (VPCSYSGCEKMFRDYAAMRKHLHIH), 283 to 305 (HVCAECGKAFLESSKLRRHQLVH), 311 to 335 (FQCTFEGCGKRFSLDFNLRTHLRIH), and 341 to 365 (FVCPFDVCNRKFAQSTNLKTHILTH).

The protein belongs to the YY transcription factor family. Expressed in kidney, liver, spleen and testis but not in colon.

It is found in the nucleus. Functionally, functions as a multifunctional transcription factor that may exhibit positive and negative control on a large number of genes. May antagonize YY1 and function in development and differentiation. This Homo sapiens (Human) protein is Transcription factor YY2 (YY2).